Here is a 497-residue protein sequence, read N- to C-terminus: UDP-N-acetylmuramoyl-L-alanyl-D-glutamate--2,6-diaminopimelate ligase (497 aa).

UDP-N-acetyl-alpha-D-muramoyl-L-alanyl-D-glutamate is bound at residue Ser32. Residue 113–119 (GTNGKTT) coordinates ATP. UDP-N-acetyl-alpha-D-muramoyl-L-alanyl-D-glutamate-binding positions include 155–156 (TT), Ser182, Gln188, and Arg190. Lys222 carries the post-translational modification N6-carboxylysine. Meso-2,6-diaminopimelate contacts are provided by residues Arg385, 409–412 (DNPR), Gly460, and Glu464. The short motif at 409–412 (DNPR) is the Meso-diaminopimelate recognition motif element.

It belongs to the MurCDEF family. MurE subfamily. The cofactor is Mg(2+). Post-translationally, carboxylation is probably crucial for Mg(2+) binding and, consequently, for the gamma-phosphate positioning of ATP.

The protein localises to the cytoplasm. The catalysed reaction is UDP-N-acetyl-alpha-D-muramoyl-L-alanyl-D-glutamate + meso-2,6-diaminopimelate + ATP = UDP-N-acetyl-alpha-D-muramoyl-L-alanyl-gamma-D-glutamyl-meso-2,6-diaminopimelate + ADP + phosphate + H(+). It participates in cell wall biogenesis; peptidoglycan biosynthesis. In terms of biological role, catalyzes the addition of meso-diaminopimelic acid to the nucleotide precursor UDP-N-acetylmuramoyl-L-alanyl-D-glutamate (UMAG) in the biosynthesis of bacterial cell-wall peptidoglycan. The protein is UDP-N-acetylmuramoyl-L-alanyl-D-glutamate--2,6-diaminopimelate ligase of Thermosynechococcus vestitus (strain NIES-2133 / IAM M-273 / BP-1).